We begin with the raw amino-acid sequence, 615 residues long: ATP-dependent RNA helicase mrh4, mitochondrial (615 aa).

A mitochondrion-targeting transit peptide spans 1–37 (MLRPKAGKCLLCSFRAAQKPVSQKWPSRALSMRTRLP). Positions 21–108 (VSQKWPSRAL…HRDRDDKKDR (88 aa)) are disordered. Residues 90–108 (QERRTSRLDHRDRDDKKDR) show a composition bias toward basic and acidic residues. The Q motif motif lies at 138–171 (QSFEQFALLDSVKQAIFQQALPELKEHVPTPVQR). The region spanning 184–395 (RRPKSEMEQY…RKRFPDINRL (212 aa)) is the Helicase ATP-binding domain. An ATP-binding site is contributed by 197–204 (AETGSGKT). The short motif at 342 to 345 (DEAD) is the DEAD box element. The Helicase C-terminal domain maps to 444–615 (PVKGLMDVKR…EGMFEGKALI (172 aa)).

Belongs to the DEAD box helicase family. MRH4 subfamily.

It localises to the mitochondrion. The catalysed reaction is ATP + H2O = ADP + phosphate + H(+). In terms of biological role, ATP-binding RNA helicase involved in mitochondrial RNA metabolism. Required for maintenance of mitochondrial DNA. In Sclerotinia sclerotiorum (strain ATCC 18683 / 1980 / Ss-1) (White mold), this protein is ATP-dependent RNA helicase mrh4, mitochondrial (mrh4).